The chain runs to 326 residues: GTP 3',8-cyclase (326 aa).

Positions 5–227 (GHGRTVDYLR…ALGREGASPS (223 aa)) constitute a Radical SAM core domain. Residue Arg-14 participates in GTP binding. [4Fe-4S] cluster is bound by residues Cys-21 and Cys-25. S-adenosyl-L-methionine is bound at residue Tyr-27. Cys-28 provides a ligand contact to [4Fe-4S] cluster. Residue Arg-64 participates in GTP binding. Gly-68 serves as a coordination point for S-adenosyl-L-methionine. Residue Thr-95 participates in GTP binding. Ser-119 is an S-adenosyl-L-methionine binding site. Residue Lys-155 participates in GTP binding. Position 189 (Met-189) interacts with S-adenosyl-L-methionine. 2 residues coordinate [4Fe-4S] cluster: Cys-250 and Cys-253. A GTP-binding site is contributed by 255-257 (RIR). Residue Cys-267 participates in [4Fe-4S] cluster binding.

The protein belongs to the radical SAM superfamily. MoaA family. Monomer and homodimer. Requires [4Fe-4S] cluster as cofactor.

The enzyme catalyses GTP + AH2 + S-adenosyl-L-methionine = (8S)-3',8-cyclo-7,8-dihydroguanosine 5'-triphosphate + 5'-deoxyadenosine + L-methionine + A + H(+). Its pathway is cofactor biosynthesis; molybdopterin biosynthesis. Catalyzes the cyclization of GTP to (8S)-3',8-cyclo-7,8-dihydroguanosine 5'-triphosphate. The sequence is that of GTP 3',8-cyclase from Sulfurovum sp. (strain NBC37-1).